Consider the following 266-residue polypeptide: Adaptin ear-binding coat-associated protein 2 (266 aa).

Disordered regions lie at residues 164–191 and 244–266; these read SMKK…LPPP and GDFT…WVQF. S181 carries the phosphoserine modification. The short motif at 243 to 246 is the WXXF motif 1 element; that stretch reads WGDF. Low complexity predominate over residues 247–258; it reads TKSTGSTSSQTQ. Residues 263 to 266 carry the WXXF motif 2 motif; it reads WVQF.

This sequence belongs to the NECAP family. In terms of assembly, interacts with AP1G1 and AP2A1 components of the adapter protein complexes AP-1 and AP-2. Interacts with the GAE domain proteins GGA1, GGA2 and GGA3.

The protein localises to the cytoplasmic vesicle. Its subcellular location is the clathrin-coated vesicle membrane. It localises to the cell membrane. In terms of biological role, involved in endocytosis. This Bos taurus (Bovine) protein is Adaptin ear-binding coat-associated protein 2 (NECAP2).